We begin with the raw amino-acid sequence, 182 residues long: Adenylate kinase (182 aa).

12-17 (GAGKGT) lines the ATP pocket. The tract at residues 32–61 (STGDLLRTEVGAKTPLGQEAAAVMNRGELV) is NMP. AMP-binding positions include threonine 33, arginine 38, 59–61 (ELV), 85–88 (GFPR), and glutamine 92. Residues 126-132 (SRGRSDD) are LID. Arginine 127 serves as a coordination point for ATP. Residues arginine 129 and arginine 140 each coordinate AMP. Residue glycine 168 participates in ATP binding.

This sequence belongs to the adenylate kinase family. In terms of assembly, monomer.

Its subcellular location is the cytoplasm. The catalysed reaction is AMP + ATP = 2 ADP. Its pathway is purine metabolism; AMP biosynthesis via salvage pathway; AMP from ADP: step 1/1. Its function is as follows. Catalyzes the reversible transfer of the terminal phosphate group between ATP and AMP. Plays an important role in cellular energy homeostasis and in adenine nucleotide metabolism. The polypeptide is Adenylate kinase (Prochlorococcus marinus (strain MIT 9313)).